The primary structure comprises 243 residues: Probable transcriptional regulatory protein BB_0025 (243 aa).

The protein belongs to the TACO1 family.

The protein localises to the cytoplasm. This is Probable transcriptional regulatory protein BB_0025 from Borreliella burgdorferi (strain ATCC 35210 / DSM 4680 / CIP 102532 / B31) (Borrelia burgdorferi).